Here is a 435-residue protein sequence, read N- to C-terminus: Xylose isomerase (435 aa).

Active-site residues include H100 and D103. The Mg(2+) site is built by E231, E267, H270, D295, D306, D308, and D338.

This sequence belongs to the xylose isomerase family. Homotetramer. It depends on Mg(2+) as a cofactor.

It localises to the cytoplasm. It carries out the reaction alpha-D-xylose = alpha-D-xylulofuranose. This is Xylose isomerase from Brucella anthropi (strain ATCC 49188 / DSM 6882 / CCUG 24695 / JCM 21032 / LMG 3331 / NBRC 15819 / NCTC 12168 / Alc 37) (Ochrobactrum anthropi).